The primary structure comprises 150 residues: Flagellar assembly factor FliW (150 aa).

Belongs to the FliW family. Interacts with translational regulator CsrA and flagellin(s).

Its subcellular location is the cytoplasm. Functionally, acts as an anti-CsrA protein, binds CsrA and prevents it from repressing translation of its target genes, one of which is flagellin. Binds to flagellin and participates in the assembly of the flagellum. This Leptospira interrogans serogroup Icterohaemorrhagiae serovar Lai (strain 56601) protein is Flagellar assembly factor FliW.